The primary structure comprises 716 residues: Ciliary WD repeat-containing protein ctxp80 (716 aa).

Residues methionine 1–glutamate 53 are disordered. The segment covering glycine 8–asparagine 21 has biased composition (polar residues). A compositionally biased stretch (basic and acidic residues) spans glutamate 23–glutamate 53. 10 WD repeats span residues tyrosine 167–arginine 208, lysine 213–lysine 254, serine 257–lysine 297, glycine 305–aspartate 343, histidine 345–threonine 382, histidine 424–leucine 462, aspartate 529–threonine 568, alanine 571–serine 610, threonine 639–proline 678, and glycine 683–lysine 715.

Belongs to the WD repeat EMAP family.

The chain is Ciliary WD repeat-containing protein ctxp80 from Euplotoides octocarinatus (Freshwater ciliate).